The chain runs to 107 residues: Nucleoid-associated protein Oant_0022 (107 aa).

The protein belongs to the YbaB/EbfC family. In terms of assembly, homodimer.

The protein resides in the cytoplasm. Its subcellular location is the nucleoid. Its function is as follows. Binds to DNA and alters its conformation. May be involved in regulation of gene expression, nucleoid organization and DNA protection. The sequence is that of Nucleoid-associated protein Oant_0022 from Brucella anthropi (strain ATCC 49188 / DSM 6882 / CCUG 24695 / JCM 21032 / LMG 3331 / NBRC 15819 / NCTC 12168 / Alc 37) (Ochrobactrum anthropi).